The sequence spans 206 residues: Large ribosomal subunit protein uL4 (206 aa).

This sequence belongs to the universal ribosomal protein uL4 family. In terms of assembly, part of the 50S ribosomal subunit.

One of the primary rRNA binding proteins, this protein initially binds near the 5'-end of the 23S rRNA. It is important during the early stages of 50S assembly. It makes multiple contacts with different domains of the 23S rRNA in the assembled 50S subunit and ribosome. Functionally, forms part of the polypeptide exit tunnel. The chain is Large ribosomal subunit protein uL4 from Rhodopseudomonas palustris (strain BisB18).